A 72-amino-acid chain; its full sequence is Translation initiation factor IF-1 (72 aa).

The region spanning 1-72 (MAKEEVLEFP…TKGRITYRFK (72 aa)) is the S1-like domain.

Belongs to the IF-1 family. As to quaternary structure, component of the 30S ribosomal translation pre-initiation complex which assembles on the 30S ribosome in the order IF-2 and IF-3, IF-1 and N-formylmethionyl-tRNA(fMet); mRNA recruitment can occur at any time during PIC assembly.

It is found in the cytoplasm. Its function is as follows. One of the essential components for the initiation of protein synthesis. Stabilizes the binding of IF-2 and IF-3 on the 30S subunit to which N-formylmethionyl-tRNA(fMet) subsequently binds. Helps modulate mRNA selection, yielding the 30S pre-initiation complex (PIC). Upon addition of the 50S ribosomal subunit IF-1, IF-2 and IF-3 are released leaving the mature 70S translation initiation complex. The sequence is that of Translation initiation factor IF-1 from Sinorhizobium medicae (strain WSM419) (Ensifer medicae).